We begin with the raw amino-acid sequence, 311 residues long: Taste receptor type 2 member 9 (311 aa).

The Extracellular segment spans residues 1–9 (MPSTIEAIY). A helical transmembrane segment spans residues 10–32 (IILIAGELTIGIWGNGFIVLVNC). Residues 33–52 (IDWLKRRDVSLIDIILISLA) are Cytoplasmic-facing. Residues 53 to 72 (ISRICLLCVISLDGFFILLF) traverse the membrane as a helical segment. The Extracellular portion of the chain corresponds to 73–86 (PGTYDTNVLESIMD). A helical membrane pass occupies residues 87-109 (AVWTFANNSSLWFTSCLSIFYLL). The Cytoplasmic segment spans residues 110–128 (KIANISHPFFFWLKLKINK). A helical transmembrane segment spans residues 129–146 (VILAILLGSFLISLIISF). Topologically, residues 147–179 (PINGMWYNLFKVSHEENITWAFKVSTIPGAFKQ) are extracellular. Residue N163 is glycosylated (N-linked (GlcNAc...) asparagine). A helical membrane pass occupies residues 180–202 (LTLNLGAMVPFILCLISFFLLLF). Over 203–233 (SLVRHTKQIQLHATGFRDPSTEAHMRAVKAV) the chain is Cytoplasmic. The chain crosses the membrane as a helical span at residues 234 to 256 (IIFLLLLILYYPVFLVMTSSTLI). Residues 257–260 (PQGK) lie on the Extracellular side of the membrane. A helical transmembrane segment spans residues 261–283 (LVLMIGDIVTVIFPSSHSFILIM). Over 284-311 (GNSKLRAAFLKMLRFVKGFLRRRKPFVP) the chain is Cytoplasmic.

It belongs to the G-protein coupled receptor T2R family.

It is found in the membrane. In terms of biological role, gustducin-coupled receptor implicated in the perception of bitter compounds in the oral cavity and the gastrointestinal tract. Signals through PLCB2 and the calcium-regulated cation channel TRPM5. This chain is Taste receptor type 2 member 9 (TAS2R9), found in Macaca mulatta (Rhesus macaque).